The following is a 421-amino-acid chain: Imidazolonepropionase (421 aa).

Fe(3+) is bound by residues His-81 and His-83. 2 residues coordinate Zn(2+): His-81 and His-83. Positions 90, 153, and 186 each coordinate 4-imidazolone-5-propanoate. Tyr-153 lines the N-formimidoyl-L-glutamate pocket. His-251 contacts Fe(3+). His-251 is a Zn(2+) binding site. Residue Glu-254 participates in 4-imidazolone-5-propanoate binding. Asp-326 is a binding site for Fe(3+). Asp-326 is a Zn(2+) binding site. N-formimidoyl-L-glutamate is bound by residues Asn-328 and Gly-330. Ser-331 is a binding site for 4-imidazolone-5-propanoate.

It belongs to the metallo-dependent hydrolases superfamily. HutI family. The cofactor is Zn(2+). Requires Fe(3+) as cofactor.

The protein localises to the cytoplasm. It carries out the reaction 4-imidazolone-5-propanoate + H2O = N-formimidoyl-L-glutamate. The protein operates within amino-acid degradation; L-histidine degradation into L-glutamate; N-formimidoyl-L-glutamate from L-histidine: step 3/3. Functionally, catalyzes the hydrolytic cleavage of the carbon-nitrogen bond in imidazolone-5-propanoate to yield N-formimidoyl-L-glutamate. It is the third step in the universal histidine degradation pathway. This Streptococcus pyogenes serotype M6 (strain ATCC BAA-946 / MGAS10394) protein is Imidazolonepropionase.